Here is a 208-residue protein sequence, read N- to C-terminus: Protein-L-isoaspartate O-methyltransferase (208 aa).

Ser-59 is a catalytic residue.

It belongs to the methyltransferase superfamily. L-isoaspartyl/D-aspartyl protein methyltransferase family.

It is found in the cytoplasm. It catalyses the reaction [protein]-L-isoaspartate + S-adenosyl-L-methionine = [protein]-L-isoaspartate alpha-methyl ester + S-adenosyl-L-homocysteine. Functionally, catalyzes the methyl esterification of L-isoaspartyl residues in peptides and proteins that result from spontaneous decomposition of normal L-aspartyl and L-asparaginyl residues. It plays a role in the repair and/or degradation of damaged proteins. The chain is Protein-L-isoaspartate O-methyltransferase from Vibrio vulnificus (strain CMCP6).